A 261-amino-acid chain; its full sequence is Potassium/proton antiporter CemA (261 aa).

Transmembrane regions (helical) follow at residues 138–158 (IISHLLTNLIGFAFISAYLIL), 184–204 (FLILLATDLCIGFHSPHGWEL), and 221–241 (IISGLVSTFPVILDTILKYWI).

It belongs to the CemA family.

It is found in the plastid. The protein resides in the chloroplast inner membrane. It catalyses the reaction K(+)(in) + H(+)(out) = K(+)(out) + H(+)(in). Its function is as follows. Contributes to K(+)/H(+) antiport activity by supporting proton efflux to control proton extrusion and homeostasis in chloroplasts in a light-dependent manner to modulate photosynthesis. Prevents excessive induction of non-photochemical quenching (NPQ) under continuous-light conditions. Indirectly promotes efficient inorganic carbon uptake into chloroplasts. This is Potassium/proton antiporter CemA from Pinus koraiensis (Korean pine).